A 439-amino-acid polypeptide reads, in one-letter code: Serine/threonine-protein kinase 2 (439 aa).

Residues N87–N439 enclose the Protein kinase domain. Residues I93–V101 and K117 contribute to the ATP site. D307 (proton acceptor) is an active-site residue.

This sequence belongs to the protein kinase superfamily. Ser/Thr protein kinase family. Post-translationally, phosphorylated in vivo. Autophosphorylated in vitro.

Its subcellular location is the host endoplasmic reticulum. It is found in the host endoplasmic reticulum-Golgi intermediate compartment. The catalysed reaction is L-seryl-[protein] + ATP = O-phospho-L-seryl-[protein] + ADP + H(+). It carries out the reaction L-threonyl-[protein] + ATP = O-phospho-L-threonyl-[protein] + ADP + H(+). Functionally, essential serine-protein kinase involved in the early stage of virion morphogenesis. In Bos taurus (Bovine), this protein is Serine/threonine-protein kinase 2 (OPG054).